We begin with the raw amino-acid sequence, 159 residues long: Small ribosomal subunit protein uS9 (159 aa).

Belongs to the universal ribosomal protein uS9 family.

The polypeptide is Small ribosomal subunit protein uS9 (Bradyrhizobium diazoefficiens (strain JCM 10833 / BCRC 13528 / IAM 13628 / NBRC 14792 / USDA 110)).